We begin with the raw amino-acid sequence, 196 residues long: UMP-CMP kinase (196 aa).

Position 13–18 (Gly13–Thr18) interacts with ATP. The segment at Ser33 to Val63 is NMP. A ribonucleoside 5'-phosphate-binding positions include Arg39, Glu61 to Val63, and Gly93 to Arg96. Asn100 lines the CMP pocket. The tract at residues Glu133–Asp143 is LID. Arg134 provides a ligand contact to ATP. Residues Arg140 and Arg151 each coordinate a ribonucleoside 5'-phosphate. Lys179 serves as a coordination point for ATP.

This sequence belongs to the adenylate kinase family. UMP-CMP kinase subfamily. Monomer. It depends on Mg(2+) as a cofactor.

Its subcellular location is the nucleus. It localises to the cytoplasm. It catalyses the reaction CMP + ATP = CDP + ADP. The enzyme catalyses dCMP + ATP = dCDP + ADP. The catalysed reaction is UMP + ATP = UDP + ADP. It carries out the reaction a 2'-deoxyribonucleoside 5'-diphosphate + ATP = a 2'-deoxyribonucleoside 5'-triphosphate + ADP. It catalyses the reaction a ribonucleoside 5'-diphosphate + ATP = a ribonucleoside 5'-triphosphate + ADP. Functionally, catalyzes the phosphorylation of pyrimidine nucleoside monophosphates at the expense of ATP. Plays an important role in de novo pyrimidine nucleotide biosynthesis. Has preference for UMP and CMP as phosphate acceptors. Also displays broad nucleoside diphosphate kinase activity. The polypeptide is UMP-CMP kinase (CMPK) (Gallus gallus (Chicken)).